A 261-amino-acid polypeptide reads, in one-letter code: Putative hydro-lyase SH0274 (261 aa).

It belongs to the D-glutamate cyclase family.

This Staphylococcus haemolyticus (strain JCSC1435) protein is Putative hydro-lyase SH0274.